We begin with the raw amino-acid sequence, 209 residues long: Amelotin (209 aa).

Positions 1–16 are cleaved as a signal peptide; the sequence is MRSTILLFCLLGSTRS. A disordered region spans residues 142–209; it reads AGANPDVQDG…ATTESANGIQ (68 aa).

It belongs to the amelotin family. In terms of processing, phosphorylated by FAM20C in vitro. O-glycosylated.

Its subcellular location is the secreted. Is a promoter of calcium phosphate mineralization, playing a critical role in the formation of the compact, mineralized, aprismatic enamel surface layer during the maturation stage of amelogenesis. This is Amelotin (AMTN) from Homo sapiens (Human).